The chain runs to 367 residues: Molybdenum import ATP-binding protein ModC (367 aa).

Residues methionine 1–glutamate 234 enclose the ABC transporter domain. Glycine 33–serine 40 provides a ligand contact to ATP. Residues histidine 293 to glycine 366 form the Mop domain.

This sequence belongs to the ABC transporter superfamily. Molybdate importer (TC 3.A.1.8) family. In terms of assembly, the complex is composed of two ATP-binding proteins (ModC), two transmembrane proteins (ModB) and a solute-binding protein (ModA).

It localises to the cell inner membrane. The catalysed reaction is molybdate(out) + ATP + H2O = molybdate(in) + ADP + phosphate + H(+). Functionally, part of the ABC transporter complex ModABC involved in molybdenum import. Responsible for energy coupling to the transport system. The protein is Molybdenum import ATP-binding protein ModC of Granulibacter bethesdensis (strain ATCC BAA-1260 / CGDNIH1).